The following is a 155-amino-acid chain: Molybdopterin synthase catalytic subunit 1 (155 aa).

Substrate contacts are provided by residues 101-102 (HR), K117, and 124-126 (KKE).

Belongs to the MoaE family. MOCS2B subfamily. As to quaternary structure, heterotetramer; composed of 2 small (MOCS2A) and 2 large (MOCS2B) subunits.

Its subcellular location is the cytoplasm. It carries out the reaction 2 [molybdopterin-synthase sulfur-carrier protein]-C-terminal-Gly-aminoethanethioate + cyclic pyranopterin phosphate + H2O = molybdopterin + 2 [molybdopterin-synthase sulfur-carrier protein]-C-terminal Gly-Gly + 2 H(+). It participates in cofactor biosynthesis; molybdopterin biosynthesis. Functionally, catalytic subunit of the molybdopterin synthase complex, a complex that catalyzes the conversion of precursor Z into molybdopterin. Acts by mediating the incorporation of 2 sulfur atoms from thiocarboxylated MOCS2A into precursor Z to generate a dithiolene group. The sequence is that of Molybdopterin synthase catalytic subunit 1 from Aedes aegypti (Yellowfever mosquito).